A 4545-amino-acid polypeptide reads, in one-letter code: Prolow-density lipoprotein receptor-related protein 1 (4545 aa).

The N-terminal stretch at 1 to 19 is a signal peptide; it reads MLTPPLLLLLPLLSALVAG. The Extracellular portion of the chain corresponds to 20–4424; the sequence is ATMDAPKTCS…SQQQPGHMTS (4405 aa). 2 LDL-receptor class A domains span residues 27–66 and 72–110; these read TCSP…EICP and RCPP…AHCR. Intrachain disulfides connect C28–C41, C35–C54, C48–C65, C73–C86, C80–C99, and C93–C109. N-linked (GlcNAc...) asparagine glycans are attached at residues N115, N137, N186, N240, and N275. LDL-receptor class B repeat units follow at residues 293–335, 336–379, and 380–423; these read GNFY…DPAM, GKVF…DLVS, and RLVY…FENY. N-linked (GlcNAc...) asparagine glycosylation is present at N358. N447 carries N-linked (GlcNAc...) asparagine glycosylation. 4 LDL-receptor class B repeats span residues 572-614, 615-660, 661-711, and 712-755; these read GFIY…DWMG, DNLY…DPLN, GWMY…DIPA, and GRLY…HGNY. Residues 639–671 form an HAT 1 repeat; that stretch reads TRKTLIEGKMTHPRAIVVDPLNGWMYWTDWEED. The N-linked (GlcNAc...) asparagine glycan is linked to N730. LDL-receptor class A domains lie at 854-892, 895-933, 936-973, 976-1013, 1015-1053, 1062-1099, 1104-1142, and 1145-1184; these read QCQP…ALCH, TCPS…ATCS, TCPP…ASCA, TCFP…AGCS, SCSS…ANCT, GCHS…KGCE, VCDP…ENCE, and ACRP…ELCD. Intrachain disulfides connect C855–C867, C862–C880, C874–C891, C896–C908, C903–C921, C915–C932, C937–C949, C944–C962, C956–C972, C977–C990, C985–C1003, C997–C1012, C1016–C1028, C1023–C1041, C1035–C1052, C1063–C1076, C1070–C1089, C1083–C1098, C1105–C1119, C1113–C1132, C1126–C1141, C1146–C1160, C1153–C1173, and C1167–C1183. Ca(2+) is bound by residues W872, D875, D877, D879, D885, and E886. N929 carries N-linked (GlcNAc...) asparagine glycosylation. The Ca(2+) site is built by W1033, D1036, D1038, D1040, D1046, and E1047. The N-linked (GlcNAc...) asparagine glycan is linked to N1051. Positions 1081, 1084, 1086, 1088, 1094, and 1095 each coordinate Ca(2+). N1156 carries N-linked (GlcNAc...) asparagine glycosylation. 2 N-linked (GlcNAc...) asparagine glycosylation sites follow: N1196 and N1219. LDL-receptor class B repeat units follow at residues 1310-1356, 1357-1399, 1400-1446, 1447-1491, and 1492-1532; these read SALY…DWIA, GNIY…DPRD, GILF…DYLE, KRIL…YGGE, and VYWT…YHPS. 2 HAT repeats span residues 1380–1413 and 1470–1503; these read TTLL…SLPR and MEVL…NTLA. Residues N1512, N1559, N1576, N1617, and N1646 are each glycosylated (N-linked (GlcNAc...) asparagine). 4 LDL-receptor class B repeats span residues 1628-1670, 1671-1714, 1715-1754, and 1755-1799; these read QRVY…DWVS, RNLF…HPLR, GKLY…DFPE, and SKLY…MGDK. The HAT 4 repeat unit spans residues 1653–1684; it reads VVSADLPNAHGLAVDWVSRNLFWTSYDTNKKQ. N1724, N1734, N1764, N1826, and N1934 each carry an N-linked (GlcNAc...) asparagine glycan. LDL-receptor class B repeat units lie at residues 1935–1977, 1978–2020, 2021–2064, and 2065–2108; these read DTIY…DWIA, GNIY…HPEK, GYLF…DYQG, and GKLY…FEDF. Residue N1996 is glycosylated (N-linked (GlcNAc...) asparagine). Residue K2010 is modified to N6-acetyllysine. N-linked (GlcNAc...) asparagine glycosylation occurs at N2049. Residues N2118 and N2128 are each glycosylated (N-linked (GlcNAc...) asparagine). 5 LDL-receptor class B repeats span residues 2254-2295, 2296-2344, 2345-2389, 2390-2432, and 2433-2474; these read NRIF…HRGW, DTLY…DECQ, NLMF…DHRA, EKLY…YGEH, and IFWT…VAND. HAT repeat units lie at residues 2277 to 2309, 2325 to 2358, and 2411 to 2444; these read TTIV…STIT, TVIT…LHPS, and HRYV…RAVQ. N-linked (GlcNAc...) asparagine glycans are attached at residues N2473, N2503, and N2522. 7 consecutive LDL-receptor class A domains span residues 2524-2563, 2566-2602, 2605-2641, 2639-2690, 2696-2732, 2734-2771, and 2774-2814; these read SCRA…SYCN, RCKK…IPCN, ACGV…MNCS, NCSA…RDCP, RCPL…THCN, FCSE…AHCE, and TCGP…AGCL. Intrachain disulfides connect C2525–C2538, C2533–C2551, C2545–C2562, C2567–C2579, C2574–C2592, and C2586–C2601. N-linked (GlcNAc...) asparagine glycosylation is present at N2602. Intrachain disulfides connect C2606–C2618, C2613–C2631, C2625–C2640, C2640–C2667, C2645–C2680, C2674–C2689, C2697–C2709, C2704–C2722, C2716–C2731, C2735–C2747, C2742–C2760, C2754–C2770, C2775–C2788, C2782–C2801, and C2795–C2813. Residues N2621 and N2639 are each glycosylated (N-linked (GlcNAc...) asparagine). The N-linked (GlcNAc...) asparagine glycan is linked to N2816. 3 consecutive LDL-receptor class A domains span residues 2818–2855, 2858–2899, and 2904–2941; these read TCDD…PECE, TCGP…PHCT, and KCNA…RGCH. 11 disulfide bridges follow: C2819/C2831, C2826/C2844, C2838/C2854, C2859/C2871, C2866/C2885, C2879/C2898, C2905/C2918, C2913/C2931, C2925/C2940, C2987/C2997, and C2993/C3006. N-linked (GlcNAc...) asparagine glycosylation occurs at N2906. In terms of domain architecture, EGF-like 1; calcium-binding spans 2983-3018; that stretch reads DVDECSTTFPCSQLCINTHGSYKCLCVEGYAPRGGD. N-linked (GlcNAc...) asparagine glycans are attached at residues N3049 and N3090. 5 LDL-receptor class B repeats span residues 3070 to 3114, 3115 to 3157, 3158 to 3201, 3202 to 3244, and 3245 to 3285; these read QMIY…DWVG, GNLY…DVQN, GYLY…DYVT, ERIY…FEDY, and VYWT…FHAL. HAT repeat units lie at residues 3128 to 3171 and 3224 to 3256; these read EVSK…HSLI and RHVV…KSIN. N-linked (GlcNAc...) asparagine glycans are attached at residues N3265 and N3334. LDL-receptor class A domains are found at residues 3334–3371, 3374–3410, 3413–3450, 3453–3491, 3494–3533, 3536–3572, 3575–3611, 3613–3649, 3654–3692, 3695–3733, and 3741–3778; these read NCTA…PDCP, KCRP…ANCD, VCLP…RDCP, TCAP…ANCT, TCGV…EECD, TCEP…ESCT, PCSE…KDCT, RCDM…EACG, TCPL…EECT, QCPP…EDCE, and HCKD…EDCS. 33 disulfides stabilise this stretch: C3335–C3347, C3342–C3360, C3354–C3370, C3375–C3387, C3382–C3400, C3394–C3409, C3414–C3427, C3421–C3440, C3434–C3449, C3454–C3467, C3461–C3480, C3474–C3490, C3495–C3508, C3502–C3521, C3515–C3532, C3537–C3549, C3544–C3562, C3556–C3571, C3576–C3588, C3583–C3601, C3595–C3610, C3614–C3626, C3621–C3639, C3633–C3648, C3655–C3667, C3662–C3680, C3674–C3691, C3696–C3710, C3704–C3723, C3717–C3732, C3742–C3755, C3750–C3768, and C3762–C3777. N3489 carries N-linked (GlcNAc...) asparagine glycosylation. N-linked (GlcNAc...) asparagine glycosylation is present at N3663. 2 N-linked (GlcNAc...) asparagine glycosylation sites follow: N3789 and N3840. Residues 3913–3925 form an LDL-receptor class B 31 repeat; sequence GRVYWTNWHTGTI. N-linked (GlcNAc...) asparagine glycosylation occurs at N3954. LDL-receptor class B repeat units follow at residues 3971–4013, 4014–4057, and 4058–4102; these read GNVY…DPLR, GTMY…DYHN, and ERLY…FEDY. The HAT 10 repeat unit spans residues 3995–4027; sequence TLISGMIDEPHAIVVDPLRGTMYWSDWGNHPKI. Residues N4076, N4126, and N4180 are each glycosylated (N-linked (GlcNAc...) asparagine). EGF-like domains lie at 4197–4230, 4233–4269, 4270–4302, and 4305–4341; these read RPGT…YTGD, ELDQ…PRCT, QQVC…FLGD, and QYRQ…TRCE. Cystine bridges form between C4201–C4211, C4205–C4221, C4237–C4247, C4241–C4257, C4259–C4268, C4273–C4283, C4277–C4293, C4309–C4319, C4313–C4329, and C4331–C4340. N4280 carries N-linked (GlcNAc...) asparagine glycosylation. Residue N4365 is glycosylated (N-linked (GlcNAc...) asparagine). Positions 4376-4410 constitute an EGF-like 6 domain; the sequence is LTCIDHCSNGGSCTMNSKMMPECQCPPHMTGPRCE. Cystine bridges form between C4378–C4388, C4382–C4398, and C4400–C4409. A helical transmembrane segment spans residues 4425–4445; sequence ILIPLLLLLLLLLVAGVVFWY. The Cytoplasmic portion of the chain corresponds to 4446 to 4545; sequence KRRVRGAKGF…PEDEIGDPLA (100 aa). An interaction with MAFB region spans residues 4446 to 4545; sequence KRRVRGAKGF…PEDEIGDPLA (100 aa). T4461 is subject to Phosphothreonine. Y4508 carries the phosphotyrosine modification. A phosphoserine mark is found at S4518, S4521, and S4524.

The protein belongs to the LDLR family. Heterodimer of an 85-kDa membrane-bound carboxyl subunit and a non-covalently attached 515-kDa N-terminal subunit. Intracellular domain interacts with MAFB. Found in a complex with PID1/PCLI1, LRP1 and CUBNI. Interacts with SNX17, PID1/PCLI1, PDGF and CUBN. The intracellular domain interacts with SHC1, GULP1 and DAB1. Can weakly interact (via NPXY motif) with DAB2 (via PID domain); the interaction is enhanced by tyrosine phosphorylation of the NPXY motif. Interacts with MDK; promotes neuronal survival. Interacts with LRPAP1; this interaction is followed by rapid internalization. Interacts with uPA/PLAU and PAI1/SERPINE1, either individually or in complex with each other, leading to rapid endocytosis; this interaction is abolished in the presence of LRPAP1/RAP. Also interacts with tPA/PLAT alone or in complex with SERPINE1. Interacts with the urokinase receptor PLAUR; this interaction leads to PLAUR internalization and is impaired in the presence of SORL1. Interacts with PDGFB. Interacts with TAU/MAPT, leading to endocytosis; this interaction is reduced in the presence of LRPAP1/RAP. Interacts with IGFBP3. Interacts with ADGRG6. Cleaved into a 85 kDa membrane-spanning subunit (LRP-85) and a 515 kDa large extracellular domain (LRP-515) that remains non-covalently associated. Gamma-secretase-dependent cleavage of LRP-85 releases the intracellular domain from the membrane. Post-translationally, phosphorylated on serine and threonine residues. In terms of processing, phosphorylated on tyrosine residues upon stimulation with PDGF. Tyrosine phosphorylation promotes interaction with SHC1.

It is found in the cell membrane. It localises to the membrane. The protein resides in the coated pit. Its subcellular location is the golgi outpost. The protein localises to the cytoplasm. It is found in the cytoskeleton. It localises to the microtubule organizing center. The protein resides in the nucleus. Endocytic receptor involved in endocytosis and in phagocytosis of apoptotic cells. Required for early embryonic development. Involved in cellular lipid homeostasis. Involved in the plasma clearance of chylomicron remnants and activated LRPAP1 (alpha 2-macroglobulin), as well as the local metabolism of complexes between plasminogen activators and their endogenous inhibitors. Acts as an LRPAP1 alpha-2-macroglobulin receptor. Acts as a TAU/MAPT receptor and controls the endocytosis of TAU/MAPT as well as its subsequent spread. May modulate cellular events, such as APP metabolism, kinase-dependent intracellular signaling, neuronal calcium signaling as well as neurotransmission. Also acts as a receptor for IGFBP3 to mediate cell growth inhibition. The polypeptide is Prolow-density lipoprotein receptor-related protein 1 (Rattus norvegicus (Rat)).